The following is a 538-amino-acid chain: Chaperonin GroEL (538 aa).

Residues 29-32, 86-90, Gly413, 476-478, and Asp492 contribute to the ATP site; these read TIGP, DGTTT, and NAA.

It belongs to the chaperonin (HSP60) family. As to quaternary structure, forms a cylinder of 14 subunits composed of two heptameric rings stacked back-to-back. Interacts with the co-chaperonin GroES.

The protein localises to the cytoplasm. It catalyses the reaction ATP + H2O + a folded polypeptide = ADP + phosphate + an unfolded polypeptide.. Functionally, together with its co-chaperonin GroES, plays an essential role in assisting protein folding. The GroEL-GroES system forms a nano-cage that allows encapsulation of the non-native substrate proteins and provides a physical environment optimized to promote and accelerate protein folding. This chain is Chaperonin GroEL, found in Staphylococcus aureus (strain USA300).